A 381-amino-acid polypeptide reads, in one-letter code: Probable serine/threonine-protein kinase PBL21 (381 aa).

Cys-3 is lipidated: S-palmitoyl cysteine. Positions 78–354 (FREVNLLGEG…GDIVVALEYL (277 aa)) constitute a Protein kinase domain. Residues 84–92 (LGEGGFGRV) and Lys-106 each bind ATP. Asp-204 acts as the Proton acceptor in catalysis. The disordered stretch occupies residues 362-381 (EARNVSSPSPEISRTPRRDL).

It belongs to the protein kinase superfamily. Ser/Thr protein kinase family. Palmitoylation at Cys-3 and Cys-7 are required for plasma membrane location.

The protein resides in the cell membrane. It carries out the reaction L-seryl-[protein] + ATP = O-phospho-L-seryl-[protein] + ADP + H(+). The catalysed reaction is L-threonyl-[protein] + ATP = O-phospho-L-threonyl-[protein] + ADP + H(+). Functionally, may be involved in plant defense signaling. The polypeptide is Probable serine/threonine-protein kinase PBL21 (Arabidopsis thaliana (Mouse-ear cress)).